We begin with the raw amino-acid sequence, 944 residues long: UvrABC system protein A (944 aa).

One can recognise an ABC transporter 1 domain in the interval 1-242; sequence MSKVDFLHIK…GKGIVKVENV (242 aa). 34 to 41 contributes to the ATP binding site; that stretch reads GLSGSGKS. The segment at 256-283 adopts a C4-type; degenerate zinc-finger fold; sequence CPKGDFEMPKIETRLFSFNSPYGMCQNC. ABC transporter domains follow at residues 359 to 597 and 610 to 935; these read EEID…KYLS and SGSG…EKSY. 643–650 is an ATP binding site; the sequence is GVSGSGKS. The C4-type zinc finger occupies 744–770; that stretch reads CEKCSGDGSIKIEMFFLPNVYITCDHC.

It belongs to the ABC transporter superfamily. UvrA family. As to quaternary structure, forms a heterotetramer with UvrB during the search for lesions.

The protein resides in the cytoplasm. In terms of biological role, the UvrABC repair system catalyzes the recognition and processing of DNA lesions. UvrA is an ATPase and a DNA-binding protein. A damage recognition complex composed of 2 UvrA and 2 UvrB subunits scans DNA for abnormalities. When the presence of a lesion has been verified by UvrB, the UvrA molecules dissociate. In Mycoplasmopsis pulmonis (strain UAB CTIP) (Mycoplasma pulmonis), this protein is UvrABC system protein A.